The following is a 566-amino-acid chain: Medium-chain fatty-acid--CoA ligase (566 aa).

231–242 is an ATP binding site; sequence ILASERAYCARL.

This sequence belongs to the ATP-dependent AMP-binding enzyme family. As to quaternary structure, homodimer. Requires Mg(2+) as cofactor.

The protein resides in the cell membrane. The enzyme catalyses hexanoate + ATP + CoA = hexanoyl-CoA + AMP + diphosphate. It catalyses the reaction octanoate + ATP + CoA = octanoyl-CoA + AMP + diphosphate. It carries out the reaction dodecanoate + ATP + CoA = dodecanoyl-CoA + AMP + diphosphate. Its pathway is lipid metabolism; fatty acid beta-oxidation. Functionally, catalyzes the esterification, concomitant with transport, of exogenous fatty acids into metabolically active CoA thioesters for subsequent degradation or incorporation into phospholipids. Is maximally active on C6:0, C8:0 and C12:0 fatty acids, while has a low activity on C14-C18 chain length fatty acids. Is involved in the anaerobic beta-oxidative degradation of fatty acids, which allows anaerobic growth of E.coli on fatty acids as a sole carbon and energy source in the presence of nitrate or fumarate as a terminal electron acceptor. Can functionally replace FadD under anaerobic conditions. The protein is Medium-chain fatty-acid--CoA ligase of Escherichia coli (strain K12).